Reading from the N-terminus, the 169-residue chain is Large ribosomal subunit protein uL10 (169 aa).

Belongs to the universal ribosomal protein uL10 family. As to quaternary structure, part of the ribosomal stalk of the 50S ribosomal subunit. The N-terminus interacts with L11 and the large rRNA to form the base of the stalk. The C-terminus forms an elongated spine to which L12 dimers bind in a sequential fashion forming a multimeric L10(L12)X complex.

Forms part of the ribosomal stalk, playing a central role in the interaction of the ribosome with GTP-bound translation factors. This is Large ribosomal subunit protein uL10 from Rickettsia massiliae (strain Mtu5).